A 205-amino-acid polypeptide reads, in one-letter code: Ribosomal RNA small subunit methyltransferase G (205 aa).

S-adenosyl-L-methionine is bound by residues Gly-66, Phe-71, 119-120 (IE), and Arg-135.

The protein belongs to the methyltransferase superfamily. RNA methyltransferase RsmG family.

It localises to the cytoplasm. It carries out the reaction guanosine(527) in 16S rRNA + S-adenosyl-L-methionine = N(7)-methylguanosine(527) in 16S rRNA + S-adenosyl-L-homocysteine. Its function is as follows. Specifically methylates the N7 position of guanine in position 527 of 16S rRNA. In Rhizobium leguminosarum bv. trifolii (strain WSM2304), this protein is Ribosomal RNA small subunit methyltransferase G.